Here is a 310-residue protein sequence, read N- to C-terminus: 4-diphosphocytidyl-2-C-methyl-D-erythritol kinase (310 aa).

The active site involves Lys10. 102–112 (PVAGGMAGGSA) lines the ATP pocket. Asp144 is a catalytic residue. The segment at 289 to 310 (TRTARGPAAGAQLLPGPVGSFA) is disordered.

Belongs to the GHMP kinase family. IspE subfamily.

The catalysed reaction is 4-CDP-2-C-methyl-D-erythritol + ATP = 4-CDP-2-C-methyl-D-erythritol 2-phosphate + ADP + H(+). It functions in the pathway isoprenoid biosynthesis; isopentenyl diphosphate biosynthesis via DXP pathway; isopentenyl diphosphate from 1-deoxy-D-xylulose 5-phosphate: step 3/6. In terms of biological role, catalyzes the phosphorylation of the position 2 hydroxy group of 4-diphosphocytidyl-2C-methyl-D-erythritol. In Cutibacterium acnes (strain DSM 16379 / KPA171202) (Propionibacterium acnes), this protein is 4-diphosphocytidyl-2-C-methyl-D-erythritol kinase.